Here is a 133-residue protein sequence, read N- to C-terminus: Cell division protein FtsL (133 aa).

Residues 1–45 lie on the Cytoplasmic side of the membrane; that stretch reads MAVEKVYQPYDEQVYNSIPKQQPQTKPEKKTVSRKVVVQLTKFEK. The chain crosses the membrane as a helical span at residues 46–65; it reads VLYITLITVIAMLSIYMLSL. Residues 66–133 are Extracellular-facing; sequence KMDAYDTRGK…VVRSNGEAKN (68 aa).

This sequence belongs to the FtsL family.

The protein resides in the cell membrane. In terms of biological role, essential cell division protein. This Staphylococcus aureus (strain NCTC 8325 / PS 47) protein is Cell division protein FtsL.